A 591-amino-acid polypeptide reads, in one-letter code: Aspartate--tRNA ligase (591 aa).

Residue E173 coordinates L-aspartate. The segment at 197–200 (QLFK) is aspartate. L-aspartate is bound at residue R219. ATP contacts are provided by residues 219 to 221 (RDE) and Q228. H448 serves as a coordination point for L-aspartate. E482 is an ATP binding site. R489 provides a ligand contact to L-aspartate. 534-537 (GLDR) serves as a coordination point for ATP.

It belongs to the class-II aminoacyl-tRNA synthetase family. Type 1 subfamily. In terms of assembly, homodimer.

It localises to the cytoplasm. The catalysed reaction is tRNA(Asp) + L-aspartate + ATP = L-aspartyl-tRNA(Asp) + AMP + diphosphate. Catalyzes the attachment of L-aspartate to tRNA(Asp) in a two-step reaction: L-aspartate is first activated by ATP to form Asp-AMP and then transferred to the acceptor end of tRNA(Asp). The sequence is that of Aspartate--tRNA ligase from Shewanella amazonensis (strain ATCC BAA-1098 / SB2B).